Here is a 454-residue protein sequence, read N- to C-terminus: Putative F-box/LRR-repeat protein At3g58880 (454 aa).

The region spanning valine 2–aspartate 48 is the F-box domain. LRR repeat units follow at residues leucine 77 to asparagine 102, serine 144 to serine 168, valine 169 to asparagine 194, isoleucine 214 to alanine 240, leucine 270 to proline 301, threonine 303 to serine 327, and serine 328 to glycine 353.

The protein is Putative F-box/LRR-repeat protein At3g58880 of Arabidopsis thaliana (Mouse-ear cress).